Here is a 604-residue protein sequence, read N- to C-terminus: Aspartate--tRNA(Asp/Asn) ligase (604 aa).

Residue Glu177 participates in L-aspartate binding. The tract at residues 201–204 (QLFK) is aspartate. Arg223 lines the L-aspartate pocket. ATP-binding positions include 223-225 (RDE) and Gln232. His457 serves as a coordination point for L-aspartate. Residue Glu495 coordinates ATP. Arg502 provides a ligand contact to L-aspartate. An ATP-binding site is contributed by 547–550 (GLDR).

The protein belongs to the class-II aminoacyl-tRNA synthetase family. Type 1 subfamily. In terms of assembly, homodimer.

The protein resides in the cytoplasm. The catalysed reaction is tRNA(Asx) + L-aspartate + ATP = L-aspartyl-tRNA(Asx) + AMP + diphosphate. Aspartyl-tRNA synthetase with relaxed tRNA specificity since it is able to aspartylate not only its cognate tRNA(Asp) but also tRNA(Asn). Reaction proceeds in two steps: L-aspartate is first activated by ATP to form Asp-AMP and then transferred to the acceptor end of tRNA(Asp/Asn). This chain is Aspartate--tRNA(Asp/Asn) ligase, found in Synechococcus sp. (strain RCC307).